The following is an 80-amino-acid chain: RNA-binding protein Hfq (80 aa).

Residues 10 to 69 (DPFLNALRKEHVPVSIYLVNGIKLQGNIESFDQYVVLLRNTVTQMVYKHAISTVVPARPV) form the Sm domain.

Belongs to the Hfq family. In terms of assembly, homohexamer.

Its function is as follows. RNA chaperone that binds small regulatory RNA (sRNAs) and mRNAs to facilitate mRNA translational regulation in response to envelope stress, environmental stress and changes in metabolite concentrations. Also binds with high specificity to tRNAs. The polypeptide is RNA-binding protein Hfq (Burkholderia ambifaria (strain ATCC BAA-244 / DSM 16087 / CCUG 44356 / LMG 19182 / AMMD) (Burkholderia cepacia (strain AMMD))).